A 249-amino-acid polypeptide reads, in one-letter code: Probable proteasome subunit alpha type-2 (249 aa).

This sequence belongs to the peptidase T1A family. As to quaternary structure, the 26S proteasome consists of a 20S proteasome core and two 19S regulatory subunits. The 20S proteasome core is composed of 28 subunits that are arranged in four stacked rings, resulting in a barrel-shaped structure. The two end rings are each formed by seven alpha subunits, and the two central rings are each formed by seven beta subunits. The catalytic chamber with the active sites is on the inside of the barrel.

Its subcellular location is the cytoplasm. It is found in the nucleus. Functionally, the proteasome is a multicatalytic proteinase complex which is characterized by its ability to cleave peptides with Arg, Phe, Tyr, Leu, and Glu adjacent to the leaving group at neutral or slightly basic pH. The proteasome has an ATP-dependent proteolytic activity. In Neurospora crassa (strain ATCC 24698 / 74-OR23-1A / CBS 708.71 / DSM 1257 / FGSC 987), this protein is Probable proteasome subunit alpha type-2 (pca-2).